The chain runs to 141 residues: Vesicle-associated membrane protein 4 (141 aa).

Residues 1–51 are disordered; that stretch reads MPPKFKRHLNDDDVTGSVKSERRNLLEDDSDEEEDFFLRGPSGPRFGPRND. At 1–118 the chain is on the cytoplasmic side; the sequence is MPPKFKRHLN…MWWRGCKIKA (118 aa). Serine 17 and serine 30 each carry phosphoserine. The v-SNARE coiled-coil homology domain occupies 52-112; that stretch reads KIKHVQNQVD…KQLRRQMWWR (61 aa). A helical; Anchor for type IV membrane protein transmembrane segment spans residues 119–139; the sequence is IMALAAAILLLMIIILIVVKF. Topologically, residues 140–141 are vesicular; sequence RT.

The protein belongs to the synaptobrevin family. In terms of assembly, identified in a complex containing STX6, STX12, VAMP4 and VTI1A. Interacts with BAIAP3; this interaction is increased in the presence of calcium. In terms of processing, (Microbial infection) Targeted and hydrolyzed by C.botulinum neurotoxin type X (BoNT/X) which hydrolyzes the 87-Arg-|-Ser-88 bond and probably inhibits neurotransmitter release. It remains unknown whether BoNT/X is ever produced, or what organisms it targets.

Its subcellular location is the golgi apparatus. The protein localises to the trans-Golgi network membrane. Functionally, involved in the pathway that functions to remove an inhibitor (probably synaptotagmin-4) of calcium-triggered exocytosis during the maturation of secretory granules. May be a marker for this sorting pathway that is critical for remodeling the secretory response of granule. The polypeptide is Vesicle-associated membrane protein 4 (Vamp4) (Mus musculus (Mouse)).